The primary structure comprises 595 residues: Arginine--tRNA ligase (595 aa).

The 'HIGH' region motif lies at 132–142 (ANPTGPLHVGH).

It belongs to the class-I aminoacyl-tRNA synthetase family. As to quaternary structure, monomer.

It is found in the cytoplasm. It carries out the reaction tRNA(Arg) + L-arginine + ATP = L-arginyl-tRNA(Arg) + AMP + diphosphate. This is Arginine--tRNA ligase from Cupriavidus pinatubonensis (strain JMP 134 / LMG 1197) (Cupriavidus necator (strain JMP 134)).